The chain runs to 1706 residues: Brefeldin A-inhibited guanine nucleotide-exchange protein 4 (1706 aa).

In terms of domain architecture, SEC7 spans 555 to 742; the sequence is MLEQRRAYKI…GSLYDRVVKE (188 aa). Glutamate 657 is a catalytic residue.

As to quaternary structure, homodimer.

It is found in the cytoplasm. Its subcellular location is the cytosol. The protein resides in the membrane. Its activity is regulated as follows. Inhibited by brefeldin A. Functionally, activates the ARF proteins by exchanging bound GDP for free GTP. Plays a role in vesicular protein sorting. In Arabidopsis thaliana (Mouse-ear cress), this protein is Brefeldin A-inhibited guanine nucleotide-exchange protein 4 (BIG4).